We begin with the raw amino-acid sequence, 891 residues long: Protein translocase subunit SecA 1 (891 aa).

Residues glutamine 86, 104-108 (GEGKT), and aspartate 493 contribute to the ATP site. Basic and acidic residues predominate over residues 845 to 873 (KQVAKPIEASHGDGNRKKAPVVKEKEAGR). Residues 845–891 (KQVAKPIEASHGDGNRKKAPVVKEKEAGRNDPCPCGSGKKYKKCCGE) form a disordered region. Residues cysteine 877, cysteine 879, cysteine 888, and cysteine 889 each contribute to the Zn(2+) site.

The protein belongs to the SecA family. In terms of assembly, monomer and homodimer. Part of the essential Sec protein translocation apparatus which comprises SecA, SecYEG and auxiliary proteins SecDF. Other proteins may also be involved. Requires Zn(2+) as cofactor.

Its subcellular location is the cell membrane. The protein resides in the cytoplasm. The enzyme catalyses ATP + H2O + cellular proteinSide 1 = ADP + phosphate + cellular proteinSide 2.. Functionally, part of the Sec protein translocase complex. Interacts with the SecYEG preprotein conducting channel. Has a central role in coupling the hydrolysis of ATP to the transfer of proteins into and across the cell membrane, serving as an ATP-driven molecular motor driving the stepwise translocation of polypeptide chains across the membrane. This chain is Protein translocase subunit SecA 1, found in Alkaliphilus metalliredigens (strain QYMF).